The sequence spans 670 residues: UvrABC system protein B (670 aa).

One can recognise a Helicase ATP-binding domain in the interval 51–433; it reads DGLKKGEPFQ…SSRVVEQIIR (383 aa). Residue 64–71 participates in ATP binding; that stretch reads GVTGSGKT. The short motif at 117-140 is the Beta-hairpin element; the sequence is YYDYYQPESYLPAKDQYIEKDAMI. Positions 453 to 612 constitute a Helicase C-terminal domain; it reads DVMQEIRKIV…IVPTTIRKPI (160 aa). Positions 631-666 constitute a UVR domain; the sequence is PNVIIELDAEMREAADRLDFERAIQVRELIKKLEKE.

This sequence belongs to the UvrB family. Forms a heterotetramer with UvrA during the search for lesions. Interacts with UvrC in an incision complex.

The protein localises to the cytoplasm. Its function is as follows. The UvrABC repair system catalyzes the recognition and processing of DNA lesions. A damage recognition complex composed of 2 UvrA and 2 UvrB subunits scans DNA for abnormalities. Upon binding of the UvrA(2)B(2) complex to a putative damaged site, the DNA wraps around one UvrB monomer. DNA wrap is dependent on ATP binding by UvrB and probably causes local melting of the DNA helix, facilitating insertion of UvrB beta-hairpin between the DNA strands. Then UvrB probes one DNA strand for the presence of a lesion. If a lesion is found the UvrA subunits dissociate and the UvrB-DNA preincision complex is formed. This complex is subsequently bound by UvrC and the second UvrB is released. If no lesion is found, the DNA wraps around the other UvrB subunit that will check the other stand for damage. The chain is UvrABC system protein B from Methanosarcina mazei (strain ATCC BAA-159 / DSM 3647 / Goe1 / Go1 / JCM 11833 / OCM 88) (Methanosarcina frisia).